Here is a 135-residue protein sequence, read N- to C-terminus: Probable transporter XF_0766 (135 aa).

4 helical membrane-spanning segments follow: residues 4–24 (YWYP…LLLL), 45–65 (AQDI…SVIF), 71–91 (VTVA…GLGT), and 114–134 (IVAT…MGVY).

The protein belongs to the TsuA/YedE (TC 9.B.102) family.

The protein localises to the cell inner membrane. This Xylella fastidiosa (strain 9a5c) protein is Probable transporter XF_0766.